The following is a 427-amino-acid chain: Trigger factor (427 aa).

The region spanning 160–240 is the PPIase FKBP-type domain; sequence TDTVIGDVVK…VKEVKRLELP (81 aa).

Belongs to the FKBP-type PPIase family. Tig subfamily.

The protein localises to the cytoplasm. The enzyme catalyses [protein]-peptidylproline (omega=180) = [protein]-peptidylproline (omega=0). In terms of biological role, involved in protein export. Acts as a chaperone by maintaining the newly synthesized protein in an open conformation. Functions as a peptidyl-prolyl cis-trans isomerase. This is Trigger factor from Chlorobium limicola (strain DSM 245 / NBRC 103803 / 6330).